The chain runs to 566 residues: Glutamate--tRNA ligase (566 aa).

Residues proline 105–asparagine 115 carry the 'HIGH' region motif.

It belongs to the class-I aminoacyl-tRNA synthetase family. Glutamate--tRNA ligase type 2 subfamily.

It localises to the cytoplasm. The enzyme catalyses tRNA(Glu) + L-glutamate + ATP = L-glutamyl-tRNA(Glu) + AMP + diphosphate. Functionally, catalyzes the attachment of glutamate to tRNA(Glu) in a two-step reaction: glutamate is first activated by ATP to form Glu-AMP and then transferred to the acceptor end of tRNA(Glu). The chain is Glutamate--tRNA ligase from Sulfurisphaera tokodaii (strain DSM 16993 / JCM 10545 / NBRC 100140 / 7) (Sulfolobus tokodaii).